The following is a 1419-amino-acid chain: Myosin-2B (1419 aa).

A Myosin N-terminal SH3-like domain is found at 4–57 (EVGTRCWYPNSEAGWIGCEVTKNDFQDGTYHIELTSETGLVIPIETKHLESNNA). The Myosin motor domain occupies 75–780 (EATHDLTTLS…VLAYLEKIRS (706 aa)). 169 to 176 (GESGAGKT) lines the ATP pocket. Residues 451-531 (FIGVLDIYGF…LGILSLLDEE (81 aa)) are actin-binding. IQ domains lie at 783-805 (VTEL…LYLQ), 806-830 (AMLS…DFEM), 831-854 (KTDA…VFET), 855-878 (LKNI…QREF), 879-901 (ESRS…RYQT), and 902-931 (LKTG…QAES). The stretch at 909 to 940 (IQALVRRKQSQEKLKQLKIQAESAASLKNSAA) forms a coiled coil. Residues 1061 to 1419 (KDNERTSTSS…VIKELGSLLA (359 aa)) are non alpha-helical, tail domain. The Dilute domain occupies 1143–1357 (HSILKQTVQD…LNHLSNTARR (215 aa)).

It belongs to the TRAFAC class myosin-kinesin ATPase superfamily. Myosin family. As to quaternary structure, homodimer. Interacts with calmodulin (CMD1) and the myosin light chain MLC1 through its IQ repeats.

Functionally, myosin heavy chain that is required for the cell cycle-regulated transport of various organelles and proteins for their segregation. Functions by binding with its tail domain to receptor proteins on organelles and exerting force with its N-terminal motor domain against actin filaments, thereby transporting its cargo along polarized actin cables. In Naumovozyma castellii (Yeast), this protein is Myosin-2B (MYO2B).